The primary structure comprises 297 residues: uncharacterized protein (297 aa).

The 99-residue stretch at 187–285 (EKLIATLHAS…GYAPSAVLKN (99 aa)) folds into the HTH araC/xylS-type domain. DNA-binding regions (H-T-H motif) lie at residues 204-225 (ADMAATIPCSEAWLRRLFLRYT) and 252-275 (VGEVADTLNFFDSFHFSKAFKHKF).

This is an uncharacterized protein from Escherichia coli (strain K12).